Consider the following 294-residue polypeptide: Urease accessory protein UreD 1 (294 aa).

The disordered stretch occupies residues 1 to 20; that stretch reads MALSLDDLPEKPAPAEPVSA.

Belongs to the UreD family. UreD, UreF and UreG form a complex that acts as a GTP-hydrolysis-dependent molecular chaperone, activating the urease apoprotein by helping to assemble the nickel containing metallocenter of UreC. The UreE protein probably delivers the nickel.

It localises to the cytoplasm. Its function is as follows. Required for maturation of urease via the functional incorporation of the urease nickel metallocenter. This is Urease accessory protein UreD 1 from Methylorubrum populi (strain ATCC BAA-705 / NCIMB 13946 / BJ001) (Methylobacterium populi).